We begin with the raw amino-acid sequence, 591 residues long: Paralemmin-3 (591 aa).

Repeats lie at residues 171 to 174 (EKNK), 183 to 186 (EKNQ), 224 to 227 (EKNQ), and 234 to 237 (KNQD). Residues 282-293 (DQTQSTSDQNME) are compositionally biased toward polar residues. Disordered regions lie at residues 282-317 (DQTQ…TKDQ), 332-413 (KGTT…QNQD), and 515-591 (PDLK…CVVM). Basic and acidic residues-rich tracts occupy residues 306 to 317 (SQSEGKIQTKDQ) and 349 to 383 (EPKE…DMDP). 2 stretches are compositionally biased toward polar residues: residues 385 to 413 (QLST…QNQD) and 528 to 542 (QESS…TIAQ). Residues 543-554 (SSSAEGNSSPES) are compositionally biased toward low complexity. A compositionally biased stretch (polar residues) spans 559 to 575 (QKSQGTDSQQGGNTATQ). Positions 579–583 (RRKKK) match the Nuclear localization signal motif. Residues C585 and C587 are each lipidated (S-palmitoyl cysteine). C588 bears the Cysteine methyl ester mark. Residue C588 is the site of S-farnesyl cysteine attachment. The propeptide at 589-591 (VVM) is removed in mature form.

The protein belongs to the paralemmin family. In terms of processing, may be phosphorylated during oocyte maturation. Post-translationally, palmitoylated on Cys-585 and Cys-587 and prenylated on Cys-588; which is required for membrane association. As to expression, in Xenopus oocyte, in the central nervous system cells of tadpoles and adult frogs, and transiently in epithelial cells of stomach and gut of tadpoles. Highly expressed in kidney.

The protein localises to the cytoplasm. It is found in the nucleus. It localises to the cell membrane. Functionally, maternal ATP-binding protein that may have multiple functions during development, one of which may be associated with the development and maintenance of the central nervous system. The sequence is that of Paralemmin-3 (palm3) from Xenopus laevis (African clawed frog).